Consider the following 209-residue polypeptide: Putative amino acid efflux protein YcgF (209 aa).

6 helical membrane passes run 1 to 21, 39 to 59, 62 to 82, 110 to 130, 147 to 167, and 184 to 204; these read MNIF…VGPV, IFGL…YFGL, FLTA…VLTY, FASG…WLGI, LLIY…CMAI, and LTGI…YQGI.

It belongs to the Rht family.

The protein localises to the cell membrane. The sequence is that of Putative amino acid efflux protein YcgF (ycgF) from Bacillus subtilis (strain 168).